The following is a 164-amino-acid chain: Interferon gamma (164 aa).

Positions 1-19 (MTCQTYNLFVLSVIMIYYG) are cleaved as a signal peptide. 2 N-linked (GlcNAc...) asparagine glycosylation sites follow: Asn-42 and Asn-61.

This sequence belongs to the type II (or gamma) interferon family. Homodimer.

The protein localises to the secreted. In terms of biological role, produced by lymphocytes activated by specific antigens or mitogens. IFN-gamma, in addition to having antiviral activity, has important immunoregulatory functions. It is a potent activator of macrophages, it has antiproliferative effects on transformed cells and it can potentiate the antiviral and antitumor effects of the type I interferons. In Gallus gallus (Chicken), this protein is Interferon gamma (IFNG).